Here is a 298-residue protein sequence, read N- to C-terminus: Small ribosomal subunit protein uS3 (298 aa).

A KH type-2 domain is found at 38–106; that stretch reads IRRRLSRGME…QVQLNILEVK (69 aa). The tract at residues 212 to 298 is disordered; sequence KQKQQESEVR…EPRADEKTEG (87 aa). Over residues 214–237 the composition is skewed to basic and acidic residues; it reads KQQESEVRPPRGERGERGGRPERG. Residues 265–278 show a composition bias toward polar residues; the sequence is GSAQSPEQAQTSGD.

Belongs to the universal ribosomal protein uS3 family. As to quaternary structure, part of the 30S ribosomal subunit. Forms a tight complex with proteins S10 and S14.

Functionally, binds the lower part of the 30S subunit head. Binds mRNA in the 70S ribosome, positioning it for translation. The chain is Small ribosomal subunit protein uS3 from Saccharopolyspora erythraea (strain ATCC 11635 / DSM 40517 / JCM 4748 / NBRC 13426 / NCIMB 8594 / NRRL 2338).